Consider the following 145-residue polypeptide: Protein BUD31 homolog 1 (145 aa).

This sequence belongs to the BUD31 (G10) family.

Its subcellular location is the nucleus. The protein is Protein BUD31 homolog 1 of Oryza sativa subsp. japonica (Rice).